The primary structure comprises 280 residues: Energy-coupling factor transporter ATP-binding protein EcfA2 (280 aa).

One can recognise an ABC transporter domain in the interval 3–245; that stretch reads INLQNVSYTY…VSLLEKKQLG (243 aa). 40 to 47 serves as a coordination point for ATP; the sequence is GHTGSGKS.

Belongs to the ABC transporter superfamily. Energy-coupling factor EcfA family. In terms of assembly, forms a stable energy-coupling factor (ECF) transporter complex composed of 2 membrane-embedded substrate-binding proteins (S component), 2 ATP-binding proteins (A component) and 2 transmembrane proteins (T component).

The protein resides in the cell membrane. In terms of biological role, ATP-binding (A) component of a common energy-coupling factor (ECF) ABC-transporter complex. Unlike classic ABC transporters this ECF transporter provides the energy necessary to transport a number of different substrates. The protein is Energy-coupling factor transporter ATP-binding protein EcfA2 of Streptococcus pyogenes serotype M1.